The following is a 158-amino-acid chain: Endoribonuclease YbeY (158 aa).

Zn(2+) contacts are provided by H118, H122, and H128.

It belongs to the endoribonuclease YbeY family. Zn(2+) is required as a cofactor.

It is found in the cytoplasm. Single strand-specific metallo-endoribonuclease involved in late-stage 70S ribosome quality control and in maturation of the 3' terminus of the 16S rRNA. The polypeptide is Endoribonuclease YbeY (Bartonella quintana (strain Toulouse) (Rochalimaea quintana)).